The sequence spans 242 residues: Caffeoyl-CoA O-methyltransferase 4 (242 aa).

Lys16 contributes to the substrate binding site. S-adenosyl-L-methionine is bound by residues Thr58, Glu80, 82-83 (GV), Ser88, Asp106, and Ala135. Substrate is bound at residue Asp158. Asp158 is a binding site for a divalent metal cation. An S-adenosyl-L-methionine-binding site is contributed by Asp160. A divalent metal cation contacts are provided by Asp184 and Asn185. A substrate-binding site is contributed by Asn189.

Belongs to the class I-like SAM-binding methyltransferase superfamily. Cation-dependent O-methyltransferase family. CCoAMT subfamily. It depends on Mg(2+) as a cofactor. Mostly expressed in the bottom and middle parts of the stems.

It carries out the reaction (E)-caffeoyl-CoA + S-adenosyl-L-methionine = (E)-feruloyl-CoA + S-adenosyl-L-homocysteine + H(+). Its pathway is aromatic compound metabolism; phenylpropanoid biosynthesis. Its function is as follows. Methylates caffeoyl-CoA to feruloyl-CoA and 5-hydroxyferuloyl-CoA to sinapoyl-CoA. Plays a role in the synthesis of feruloylated polysaccharides. Involved in the reinforcement of the plant cell wall. Also involved in the responding to wounding or pathogen challenge by the increased formation of cell wall-bound ferulic acid polymers. The polypeptide is Caffeoyl-CoA O-methyltransferase 4 (CCOAOMT4) (Nicotiana tabacum (Common tobacco)).